Here is a 635-residue protein sequence, read N- to C-terminus: Thrombopoietin receptor (635 aa).

The signal sequence occupies residues Met1–Ser25. The Extracellular segment spans residues Gln26 to Trp491. Cystine bridges form between Cys40–Cys50 and Cys77–Cys93. N-linked (GlcNAc...) asparagine glycans are attached at residues Asn117 and Asn178. The region spanning Gly172–Pro281 is the Fibronectin type-III 1 domain. Intrachain disulfides connect Cys193–Cys323, Cys194–Cys241, Cys291–Cys301, and Cys334–Cys352. A disordered region spans residues Ala205–Ser232. The N-linked (GlcNAc...) asparagine glycan is linked to Asn298. The N-linked (GlcNAc...) asparagine glycan is linked to Asn358. The region spanning Pro392–Ala486 is the Fibronectin type-III 2 domain. A WSXWS motif motif is present at residues Trp474 to Ser478. Residues Ile492 to Leu513 traverse the membrane as a helical segment. Residues Arg514–Pro635 are Cytoplasmic-facing. The Box 1 motif motif lies at Leu528–His536. Residues Lys553 and Lys573 each participate in a glycyl lysine isopeptide (Lys-Gly) (interchain with G-Cter in ubiquitin) cross-link. 3 positions are modified to phosphotyrosine: Tyr591, Tyr626, and Tyr631.

The protein belongs to the type I cytokine receptor family. Type 1 subfamily. Homodimer. Interacts with ATXN2L. Interacts with JAK2 and TYK2; these interactions increase MPL localization to the cell membrane. Interacts with THPO. Interacts with SHIP/INPP5D. Interacts with BTK. Interacts with SYK; this interaction negatively regulates THPO-mediated ERK1/2 signaling. Phosphorylated at Tyr-591 in response to THPO stimulation. Post-translationally, ubiquitination at Lys-553 and Lys-573 targets MPL for degradation by both the lysosomal and proteasomal pathways. The E3 ubiquitin-protein ligase CBL significantly contributes to this ubiquitination. Expressed at a low level in a large number of cells of hematopoietic origin. Isoform 1 and isoform 2 are always found to be coexpressed.

The protein resides in the cell membrane. It is found in the golgi apparatus. Its subcellular location is the cell surface. In terms of biological role, receptor for thrombopoietin that regulates hematopoietic stem cell renewal, megakaryocyte differentiation, and platelet formation. Upon activation by THPO, induces rapid tyrosine phosphorylation and activation of JAK2, providing docking sites for many signaling proteins such as STAT5, SHIP/INPP5D, GRB2, SOS1 and PI3K. In turn, These signaling cascades lead to the proliferation, survival, and differentiation of megakaryocytes, ultimately leading to increased platelet production. The polypeptide is Thrombopoietin receptor (MPL) (Homo sapiens (Human)).